Consider the following 414-residue polypeptide: Probable serine/threonine-protein kinase CHK1 homolog (414 aa).

Positions Tyr-4 to Val-255 constitute a Protein kinase domain. ATP is bound by residues Leu-10 to Val-18 and Lys-32. The Proton acceptor role is filled by Asp-121. A disordered region spans residues Pro-291–Ala-310.

This sequence belongs to the protein kinase superfamily. CAMK Ser/Thr protein kinase family. NIM1 subfamily.

The protein resides in the nucleus. It carries out the reaction L-seryl-[protein] + ATP = O-phospho-L-seryl-[protein] + ADP + H(+). The enzyme catalyses L-threonyl-[protein] + ATP = O-phospho-L-threonyl-[protein] + ADP + H(+). Its function is as follows. Serine/threonine-protein kinase which is required for checkpoint-mediated cell cycle arrest and activation of DNA repair in response to the presence of DNA damage or unreplicated DNA. May also negatively regulate cell cycle progression during unperturbed cell cycles. The protein is Probable serine/threonine-protein kinase CHK1 homolog (CHK1) of Encephalitozoon cuniculi (strain GB-M1) (Microsporidian parasite).